The chain runs to 1521 residues: Protein OPAQUE1 (1521 aa).

A Myosin N-terminal SH3-like domain is found at 4–53; the sequence is RKGLKVWVEEKGEGWVEAEVVEAKERAVVVFSSQRKKITVSPEKLLPRDT. The Myosin motor domain occupies 60-731; it reads GHVDDMTKLT…QIAILDMRRA (672 aa). ATP contacts are provided by residues 155–162 and 208–216; these read GESGAGKT and NDNSSRFGK. Actin-binding regions lie at residues 493-527, 529-552, 587-612, and 612-634; these read LIEK…FRNF, SHLR…AGKV, FTSL…KLQL, and LQAL…KPNS. IQ domains are found at residues 733–755, 756–778, 781–803, 804–826, 829–851, and 852–874; these read ILDN…KEFV, KTRE…KMFA, RETA…RAHL, QACL…RYFS, REHK…ILFQ, and NYRQ…KELR. Coiled coils occupy residues 870–910 and 974–1050; these read RKEL…ERRL and SAEA…LRQK. Positions 1162-1459 constitute a Dilute domain; sequence DHVIEAINDV…VAAMREMVNK (298 aa).

It belongs to the TRAFAC class myosin-kinesin ATPase superfamily. Myosin family. Plant myosin class XI subfamily. In terms of assembly, interacts (via C-terminus) with HIP (via C-terminus), but not with zeins, FL1 or intrinsic proteins of protein bodies. As to expression, high expression in kernels and stems, intermediate in ears and leaves, and low in roots, silks and tassels.

Its subcellular location is the cytoplasm. Functionally, myosin XI motor protein required for endoplasmic reticulum motility and protein body formation. May function by binding with its tail domain to receptor proteins on membranes and exerting force with its N-terminal motor domain against actin filaments, thereby transporting its cargo along polarized actin cables. This Zea mays (Maize) protein is Protein OPAQUE1.